The following is a 350-amino-acid chain: MGSSAGEIMGRLMKGEIEDEELKKLIRHQWDRRIEWGYKPTHEKQLAFNLDFIKGLKEMVMSGEIDTMNKETYELPTAFLEAVFGKTVKQSCCYFKDENSTIDEAEEAAHELYCERAQIKDGQTVLDIGCGQGGLVLYIAEKYKNCHVTGLTNSKAQANYIEQQAEKLELTNVDVIFADVTKFDTDKTYDRILVVETIEHMKNIQLFMKKLSTWMTEDSLLFVDHISHKTFNHNFEALDEDDWYSGFIFPKGCVTILSSSTLLYFQDDVSALDHWVVNGMHMARSVEAWRKKLDETIEAAREILEPGLGSKEAVNQVITHIRTFCIGGYEQFSYNNGEEWMITQILFKKK.

S-adenosyl-L-methionine-binding residues include S91, G129, N153, Q157, D179, V180, and V195. The active site involves C325.

It belongs to the CFA/CMAS family. Homodimer.

The protein resides in the cytoplasm. It catalyses the reaction (S)-stylopine + S-adenosyl-L-methionine = (S)-cis-N-methylstylopine + S-adenosyl-L-homocysteine. The catalysed reaction is (S)-tetrahydropalmatine + S-adenosyl-L-methionine = (S)-cis-N-methyltetrahydropalmatine + S-adenosyl-L-homocysteine. The enzyme catalyses (S)-canadine + S-adenosyl-L-methionine = (S)-cis-N-methylcanadine + S-adenosyl-L-homocysteine. It carries out the reaction (S)-scoulerine + S-adenosyl-L-methionine = (S)-cis-N-methylscoulerine + S-adenosyl-L-homocysteine. Its pathway is alkaloid biosynthesis. In terms of biological role, N-methyltransferase with a broad substrate range, accepting protoberberine alkaloids (R,S)-stylopine, (R,S)-nandinine and (R,S)-tetrahydropalmatine, and to a lesser extent (R,S)-canadine, (R,S)-tetrahydrogroenlandicine (cheilanthifoline) and (S)-scoulerine. This chain is (S)-tetrahydroprotoberberine N-methyltransferase, found in Eschscholzia californica (California poppy).